The chain runs to 147 residues: SsrA-binding protein (147 aa).

This sequence belongs to the SmpB family.

It is found in the cytoplasm. Functionally, required for rescue of stalled ribosomes mediated by trans-translation. Binds to transfer-messenger RNA (tmRNA), required for stable association of tmRNA with ribosomes. tmRNA and SmpB together mimic tRNA shape, replacing the anticodon stem-loop with SmpB. tmRNA is encoded by the ssrA gene; the 2 termini fold to resemble tRNA(Ala) and it encodes a 'tag peptide', a short internal open reading frame. During trans-translation Ala-aminoacylated tmRNA acts like a tRNA, entering the A-site of stalled ribosomes, displacing the stalled mRNA. The ribosome then switches to translate the ORF on the tmRNA; the nascent peptide is terminated with the 'tag peptide' encoded by the tmRNA and targeted for degradation. The ribosome is freed to recommence translation, which seems to be the essential function of trans-translation. The protein is SsrA-binding protein of Mycoplasmopsis fermentans (strain ATCC 19989 / NBRC 14854 / NCTC 10117 / PG18) (Mycoplasma fermentans).